The primary structure comprises 244 residues: tRNA pseudouridine synthase B (244 aa).

Asp-46 acts as the Nucleophile in catalysis.

This sequence belongs to the pseudouridine synthase TruB family. Type 1 subfamily.

The enzyme catalyses uridine(55) in tRNA = pseudouridine(55) in tRNA. Functionally, responsible for synthesis of pseudouridine from uracil-55 in the psi GC loop of transfer RNAs. This chain is tRNA pseudouridine synthase B, found in Bordetella parapertussis (strain 12822 / ATCC BAA-587 / NCTC 13253).